A 290-amino-acid polypeptide reads, in one-letter code: Translin-associated protein X (290 aa).

The interval 1–34 is disordered; it reads MNGKEGPGGFRKRKHDNFPHNQRREGKDASSSSP. The segment covering 16 to 28 has biased composition (basic and acidic residues); sequence DNFPHNQRREGKD. The tract at residues 73-208 is interaction with C1D; that stretch reads LLHRITSAPD…MRMCINSVGN (136 aa). Residues Glu129 and Glu197 each contribute to the Mg(2+) site. A Glycyl lysine isopeptide (Lys-Gly) (interchain with G-Cter in SUMO2) cross-link involves residue Lys279.

Belongs to the translin family. In terms of assembly, ring-shaped heterooctamer of six TSN and two TSNAX subunits. Interacts with GOLGA3, TSNAXIP1, SUN1 and AKAP9. Interacts with the homodimeric form of C1D following gamma-radiation. Interacts with TSN and C1D in a mutually exclusive manner. Post-translationally, sumoylated with SUMO1. Detected in cerebellum.

The protein resides in the cytoplasm. It localises to the perinuclear region. It is found in the golgi apparatus. The protein localises to the nucleus. Its function is as follows. Acts in combination with TSN as an endonuclease involved in the activation of the RNA-induced silencing complex (RISC). Possible role in spermatogenesis. The sequence is that of Translin-associated protein X (Tsnax) from Rattus norvegicus (Rat).